A 509-amino-acid polypeptide reads, in one-letter code: GMP synthase [glutamine-hydrolyzing] (509 aa).

One can recognise a Glutamine amidotransferase type-1 domain in the interval Leu4–Ser194. Cys81 functions as the Nucleophile in the catalytic mechanism. Catalysis depends on residues His168 and Glu170. The 190-residue stretch at Trp195–Arg384 folds into the GMPS ATP-PPase domain. An ATP-binding site is contributed by Ser222–Ser228.

Homodimer.

The catalysed reaction is XMP + L-glutamine + ATP + H2O = GMP + L-glutamate + AMP + diphosphate + 2 H(+). It functions in the pathway purine metabolism; GMP biosynthesis; GMP from XMP (L-Gln route): step 1/1. Catalyzes the synthesis of GMP from XMP. The chain is GMP synthase [glutamine-hydrolyzing] from Clostridium perfringens (strain 13 / Type A).